The sequence spans 309 residues: Mas-related G-protein coupled receptor member E (309 aa).

Over 1-21 (MSLRVHTHSPSTQGDMAFNLT) the chain is Extracellular. Residue asparagine 19 is glycosylated (N-linked (GlcNAc...) asparagine). The chain crosses the membrane as a helical span at residues 22 to 42 (ILSLTELLSLGGLLGNGVALW). At 43-59 (LLNQNVYRNPFSIYLLD) the chain is on the cytoplasmic side. Residues 60–80 (VACADLIFLCCHMVAIIPELL) form a helical membrane-spanning segment. At 81-91 (QDQLNFPEFVH) the chain is on the extracellular side. A helical transmembrane segment spans residues 92–112 (ISLIMLRFFCYIVGLSLLVAI). Residues 113-132 (STEQCLATLFPSGYLCRRPR) are Cytoplasmic-facing. Residues 133–153 (YLTTCVCAFIWVLCLLLDLLL) traverse the membrane as a helical segment. Topologically, residues 154–168 (SGACTQFFGAPSYHL) are extracellular. The chain crosses the membrane as a helical span at residues 169–189 (CGMLWLVVAVLLAALCCTMCV). Over 190–212 (TSLLLLLRVERGPERHQPRGFPT) the chain is Cytoplasmic. The helical transmembrane segment at 213–233 (LVLLVILLFLFCGLPFGIFWL) threads the bilayer. At 234-247 (SKNLSWHTPLYFYH) the chain is on the extracellular side. Asparagine 236 carries an N-linked (GlcNAc...) asparagine glycan. A helical transmembrane segment spans residues 248 to 268 (FSFFMASVHSAAKPAIYFFLG). Topologically, residues 269 to 309 (STPGQRFQEPLRLVLQRALGDEAELGAVREASQGGLVDMTV) are cytoplasmic.

Belongs to the G-protein coupled receptor 1 family. Mas subfamily.

Its subcellular location is the cell membrane. Its function is as follows. Orphan receptor. May regulate nociceptor function and/or development, including the sensation or modulation of pain. This is Mas-related G-protein coupled receptor member E (Mrgpre) from Rattus norvegicus (Rat).